The following is a 104-amino-acid chain: Phycoerythrin alpha-2 chain, chloroplastic (104 aa).

The transit peptide at 1 to 37 directs the protein to the chloroplast; it reads MSAKIIAFSAVVATASAFAPTAGFVPRLRSGATSVNM. The residue at position 41 (Lys-41) is a 5-hydroxylysine. Residues Cys-56 and Arg-58 each contribute to the 15,16-dihydrobiliverdin site. Residues 61 to 63 form a 15,16-dihydrobiliverdin chromophore region; that stretch reads KEY. Lys-78 is a 15,16-dihydrobiliverdin binding site.

Belongs to the phycoerythrin family. As to quaternary structure, heterotetramer of 2 different alpha chains and 2 identical beta chains. The subunit composition could comprise of any combination of 2 out of 4 different alpha units with an invariant beta unit. Contains one covalently linked 15,16-dihydrobiliverdin chromophore.

Its subcellular location is the plastid. It is found in the chloroplast thylakoid membrane. Its function is as follows. Light-harvesting photosynthetic tetrapyrrole chromophore-protein from the phycobiliprotein complex. This is Phycoerythrin alpha-2 chain, chloroplastic (cpeA2) from Rhodomonas sp. (strain CS 24) (Chroomonas sp. (strain CS24)).